Here is a 480-residue protein sequence, read N- to C-terminus: Glutamate--tRNA ligase (480 aa).

Positions 12-22 (PSPTGAPHLGL) match the 'HIGH' region motif. The 'KMSKS' region signature appears at 255 to 259 (KLSKR). Residue lysine 258 coordinates ATP.

Belongs to the class-I aminoacyl-tRNA synthetase family. Glutamate--tRNA ligase type 1 subfamily. In terms of assembly, monomer.

It localises to the cytoplasm. It carries out the reaction tRNA(Glu) + L-glutamate + ATP = L-glutamyl-tRNA(Glu) + AMP + diphosphate. Functionally, catalyzes the attachment of glutamate to tRNA(Glu) in a two-step reaction: glutamate is first activated by ATP to form Glu-AMP and then transferred to the acceptor end of tRNA(Glu). This Tropheryma whipplei (strain TW08/27) (Whipple's bacillus) protein is Glutamate--tRNA ligase.